Consider the following 603-residue polypeptide: NADH-ubiquinone oxidoreductase chain 5 (603 aa).

16 consecutive transmembrane segments (helical) span residues 4–24 (FTTM…ATLI), 38–58 (TAIA…ICLG), 89–109 (FLPV…WYMA), 122–142 (LIFL…QLFI), 171–191 (AILY…WFLL), 211–233 (LPLL…HPWL), 241–261 (TPVS…FLLI), 273–293 (IQTL…ICAL), 301–320 (IVAF…IGIN), 325–347 (ALLH…GSII), 366–386 (MPLT…MPFL), 405–424 (NTWA…AYST), 457–477 (LMLG…PMSL), 488–508 (LAAL…NYLA), 524–544 (IMLG…SLLM), and 582–602 (GLIK…LLMI).

This sequence belongs to the complex I subunit 5 family. As to quaternary structure, core subunit of respiratory chain NADH dehydrogenase (Complex I) which is composed of 45 different subunits.

The protein resides in the mitochondrion inner membrane. The enzyme catalyses a ubiquinone + NADH + 5 H(+)(in) = a ubiquinol + NAD(+) + 4 H(+)(out). Core subunit of the mitochondrial membrane respiratory chain NADH dehydrogenase (Complex I) which catalyzes electron transfer from NADH through the respiratory chain, using ubiquinone as an electron acceptor. Essential for the catalytic activity and assembly of complex I. The sequence is that of NADH-ubiquinone oxidoreductase chain 5 (MT-ND5) from Pongo abelii (Sumatran orangutan).